Reading from the N-terminus, the 140-residue chain is MAIERTFSIIKPDATERNLTGAINALIEKAGLRIVAQKRIRMTRDQAETFYAVHKARPFFGELVDFMISGPVVVQVLEGEGAILKYRDVMGATDPSKAAEGTIRKAHAKSIGENSVHGSDAPETAAIEIAQFFAGNEIVG.

ATP is bound by residues Lys11, Phe59, Arg87, Thr93, Arg104, and Asn114. His117 acts as the Pros-phosphohistidine intermediate in catalysis.

This sequence belongs to the NDK family. Homotetramer. The cofactor is Mg(2+).

The protein localises to the cytoplasm. It catalyses the reaction a 2'-deoxyribonucleoside 5'-diphosphate + ATP = a 2'-deoxyribonucleoside 5'-triphosphate + ADP. The enzyme catalyses a ribonucleoside 5'-diphosphate + ATP = a ribonucleoside 5'-triphosphate + ADP. In terms of biological role, major role in the synthesis of nucleoside triphosphates other than ATP. The ATP gamma phosphate is transferred to the NDP beta phosphate via a ping-pong mechanism, using a phosphorylated active-site intermediate. The polypeptide is Nucleoside diphosphate kinase (Bradyrhizobium sp. (strain ORS 278)).